The chain runs to 168 residues: Plastocyanin B, chloroplastic (168 aa).

The N-terminal 69 residues, 1-69, are a transit peptide targeting the chloroplast; sequence MAAVTSAAVS…SAMIASNAMA (69 aa). The Plastocyanin-like domain occupies 70–168; the sequence is VDVLLGADDG…AGMVGKVIVN (99 aa). The Cu cation site is built by H106, C153, H156, and M161.

This sequence belongs to the plastocyanin family. Cu(2+) is required as a cofactor.

The protein resides in the plastid. It localises to the chloroplast thylakoid membrane. Participates in electron transfer between P700 and the cytochrome b6-f complex in photosystem I. The protein is Plastocyanin B, chloroplastic (PETE) of Populus nigra (Lombardy poplar).